We begin with the raw amino-acid sequence, 295 residues long: Transcriptional regulator SirC (295 aa).

Residues 195 to 292 (EKVYNIIISD…KITPLSFMRT (98 aa)) form the HTH araC/xylS-type domain. 2 DNA-binding regions (H-T-H motif) span residues 212–233 (AEVA…AAEE) and 259–282 (ISQV…KRHF).

Positive regulator of the expression of the invasion-associated type III secretion system encoded within SPI-1 (pathogenicity island 1). The sequence is that of Transcriptional regulator SirC (sirC) from Salmonella typhi.